The following is an 861-amino-acid chain: ToMV resistant protein Tm-2 netted virescent (861 aa).

Residues 63 to 83 are a coiled coil; sequence VKNLLKDIQELAGDVEDLLDD. An NB-ARC domain is found at 162-388; that stretch reads DDFNMLQAKL…LESMGHKVQD (227 aa). Residue 185–192 participates in ATP binding; sequence GMPGLGKT. 13 LRR repeats span residues 225 to 248, 305 to 327, 388 to 411, 449 to 472, 510 to 536, 585 to 608, 609 to 631, 652 to 680, 689 to 710, 712 to 735, 736 to 758, 784 to 807, and 810 to 835; these read LDIA…NLRS, LHAL…IFNF, DGCA…CFLY, LAED…TYNG, VARL…KLEK, MTCL…IVKL, TRLE…VWES, ISSF…FFEP, LRKL…IFSP, LKAL…LSSY, PHIA…SFPP, LRKL…EANG, and FPQL…DVSM.

This sequence belongs to the disease resistance NB-LRR family. In terms of assembly, (Microbial infection) Interacts with tobamoviruses mouvement protein at the plasma membrane; this interaction triggers defense responses leading to programmed cell death. As to quaternary structure, binds to HSP90 proteins; this interaction seems required for defense responses toward tobamoviruses.

The protein resides in the cell membrane. Functionally, inhibitor of viral mouvements which confers resistance to some tobamoviruses including tomato mosaic virus (ToMV) (e.g. isolate L and W3) and tobacco mosaic virus (TMV), but not to resistance-breaking isolates (e.g. Ltbl) ToMV and tomato brown rugose fruit virus (ToBRFV). Elicits a hypersensitive reaction in response to avirulent (Avr) movement proteins from resistance inducing tobamoviruses (e.g. ToMV and TMV) strains, thus leading to programmed cell death. In Solanum lycopersicum (Tomato), this protein is ToMV resistant protein Tm-2 netted virescent.